A 159-amino-acid chain; its full sequence is 2-C-methyl-D-erythritol 2,4-cyclodiphosphate synthase (159 aa).

2 residues coordinate a divalent metal cation: D9 and H11. 4-CDP-2-C-methyl-D-erythritol 2-phosphate is bound by residues 9–11 (DVH) and 35–36 (HS). A divalent metal cation is bound at residue H43. 4-CDP-2-C-methyl-D-erythritol 2-phosphate contacts are provided by residues 57–59 (DLG), 62–66 (FPDTD), 133–136 (TTTE), F140, and R143.

It belongs to the IspF family. As to quaternary structure, homotrimer. It depends on a divalent metal cation as a cofactor.

The catalysed reaction is 4-CDP-2-C-methyl-D-erythritol 2-phosphate = 2-C-methyl-D-erythritol 2,4-cyclic diphosphate + CMP. It functions in the pathway isoprenoid biosynthesis; isopentenyl diphosphate biosynthesis via DXP pathway; isopentenyl diphosphate from 1-deoxy-D-xylulose 5-phosphate: step 4/6. Functionally, involved in the biosynthesis of isopentenyl diphosphate (IPP) and dimethylallyl diphosphate (DMAPP), two major building blocks of isoprenoid compounds. Catalyzes the conversion of 4-diphosphocytidyl-2-C-methyl-D-erythritol 2-phosphate (CDP-ME2P) to 2-C-methyl-D-erythritol 2,4-cyclodiphosphate (ME-CPP) with a corresponding release of cytidine 5-monophosphate (CMP). The polypeptide is 2-C-methyl-D-erythritol 2,4-cyclodiphosphate synthase (Shouchella clausii (strain KSM-K16) (Alkalihalobacillus clausii)).